A 132-amino-acid chain; its full sequence is Small ribosomal subunit protein uS12 (132 aa).

Asp89 is modified (3-methylthioaspartic acid). Residues 102–132 (LDTSGVADRKQSRSKYGAKVPKAGAAPAKKK) form a disordered region. Over residues 118–132 (GAKVPKAGAAPAKKK) the composition is skewed to low complexity.

Belongs to the universal ribosomal protein uS12 family. Part of the 30S ribosomal subunit. Contacts proteins S8 and S17. May interact with IF1 in the 30S initiation complex.

In terms of biological role, with S4 and S5 plays an important role in translational accuracy. Its function is as follows. Interacts with and stabilizes bases of the 16S rRNA that are involved in tRNA selection in the A site and with the mRNA backbone. Located at the interface of the 30S and 50S subunits, it traverses the body of the 30S subunit contacting proteins on the other side and probably holding the rRNA structure together. The combined cluster of proteins S8, S12 and S17 appears to hold together the shoulder and platform of the 30S subunit. The sequence is that of Small ribosomal subunit protein uS12 from Chlorobaculum tepidum (strain ATCC 49652 / DSM 12025 / NBRC 103806 / TLS) (Chlorobium tepidum).